The sequence spans 525 residues: Chromosomal replication initiator protein DnaA (525 aa).

Residues 1-71 (MNDFWQHCSA…SDLARDFWNA (71 aa)) form a domain I, interacts with DnaA modulators region. A domain II region spans residues 71-188 (APIEVQFVLD…GEADSMYERS (118 aa)). The disordered stretch occupies residues 160-182 (AAAGRRTWRPGPGAAPANGGEAD). Positions 169 to 181 (PGPGAAPANGGEA) are enriched in low complexity. Residues 189–405 (KLNPVLTFDN…GALRKILAYS (217 aa)) form a domain III, AAA+ region region. 4 residues coordinate ATP: Gly-233, Gly-235, Lys-236, and Thr-237. The segment at 406–525 (KFHGREISIE…LHVLEQTLKG (120 aa)) is domain IV, binds dsDNA.

It belongs to the DnaA family. Oligomerizes as a right-handed, spiral filament on DNA at oriC.

It is found in the cytoplasm. Plays an essential role in the initiation and regulation of chromosomal replication. ATP-DnaA binds to the origin of replication (oriC) to initiate formation of the DNA replication initiation complex once per cell cycle. Binds the DnaA box (a 9 base pair repeat at the origin) and separates the double-stranded (ds)DNA. Forms a right-handed helical filament on oriC DNA; dsDNA binds to the exterior of the filament while single-stranded (ss)DNA is stabiized in the filament's interior. The ATP-DnaA-oriC complex binds and stabilizes one strand of the AT-rich DNA unwinding element (DUE), permitting loading of DNA polymerase. After initiation quickly degrades to an ADP-DnaA complex that is not apt for DNA replication. Binds acidic phospholipids. This is Chromosomal replication initiator protein DnaA from Burkholderia ambifaria (strain ATCC BAA-244 / DSM 16087 / CCUG 44356 / LMG 19182 / AMMD) (Burkholderia cepacia (strain AMMD)).